The chain runs to 309 residues: Prepilin leader peptidase/N-methyltransferase (309 aa).

A helical transmembrane segment spans residues 35–55; that stretch reads MQLAFAIVLGLVVGSFINVVV. C96, C99, C121, and C124 together coordinate Zn(2+). The next 6 helical transmembrane spans lie at 147-167, 183-203, 207-227, 230-250, 253-273, and 288-308; these read LALF…AALL, LTLP…FASL, VIGA…FKLL, IEGI…WLGW, LPQV…VATW, and FLAA…LLLG.

Belongs to the peptidase A24 family. Zn(2+) serves as cofactor.

Its subcellular location is the cell inner membrane. It catalyses the reaction Typically cleaves a -Gly-|-Phe- bond to release an N-terminal, basic peptide of 5-8 residues from type IV prepilin, and then N-methylates the new N-terminal amino group, the methyl donor being S-adenosyl-L-methionine.. Functionally, plays an essential role in type IV pili and type II pseudopili formation by proteolytically removing the leader sequence from substrate proteins and subsequently monomethylating the alpha-amino group of the newly exposed N-terminal phenylalanine. The protein is Prepilin leader peptidase/N-methyltransferase (gspO) of Burkholderia pseudomallei (strain K96243).